A 354-amino-acid chain; its full sequence is Ribosomal RNA large subunit methyltransferase M (354 aa).

Residues S183, 216–219, D235, D255, and D271 each bind S-adenosyl-L-methionine; that span reads SPGG. K300 serves as the catalytic Proton acceptor.

Belongs to the class I-like SAM-binding methyltransferase superfamily. RNA methyltransferase RlmE family. RlmM subfamily. As to quaternary structure, monomer.

It localises to the cytoplasm. The enzyme catalyses cytidine(2498) in 23S rRNA + S-adenosyl-L-methionine = 2'-O-methylcytidine(2498) in 23S rRNA + S-adenosyl-L-homocysteine + H(+). Its function is as follows. Catalyzes the 2'-O-methylation at nucleotide C2498 in 23S rRNA. The sequence is that of Ribosomal RNA large subunit methyltransferase M from Pseudomonas putida (strain ATCC 47054 / DSM 6125 / CFBP 8728 / NCIMB 11950 / KT2440).